Consider the following 184-residue polypeptide: Transcription termination/antitermination protein NusG (184 aa).

Residues 133–163 (EGDQVRVVSGPFADFTGTVTEINPERGKVKV) enclose the KOW domain.

This sequence belongs to the NusG family.

Participates in transcription elongation, termination and antitermination. This chain is Transcription termination/antitermination protein NusG, found in Thermus thermophilus (strain ATCC 27634 / DSM 579 / HB8).